Reading from the N-terminus, the 840-residue chain is Exocyst complex component 7 (840 aa).

Residues Met-1–Tyr-112 are disordered. Residues Ser-19–Lys-31 show a composition bias toward polar residues. Composition is skewed to low complexity over residues Lys-50–Lys-73 and Gln-83–Ser-111. Residues Lys-193 to Met-227 are a coiled coil. The interval Gln-601–Thr-638 is disordered. Positions Asn-603–Ser-637 are enriched in low complexity.

Belongs to the EXO70 family. The exocyst complex is composed of sec3/exoc1, sec5/exoc2, sec6/exoc3, sec8/exoc4, sec10/exoc5, sec15/exoc6, exo70/exoc7 and exo84/exoc8.

The protein resides in the cytoplasm. It is found in the cytosol. The protein localises to the cell membrane. It localises to the midbody. Its subcellular location is the midbody ring. Functionally, component of the exocyst complex involved in the docking of exocytic vesicles with fusion sites on the plasma membrane. In Dictyostelium discoideum (Social amoeba), this protein is Exocyst complex component 7 (exoc7).